Reading from the N-terminus, the 115-residue chain is Protein translation factor SUI1 homolog (115 aa).

Belongs to the SUI1 family.

Probably involved in translation. The polypeptide is Protein translation factor SUI1 homolog (Sporobolus stapfianus (Ressurection grass)).